The chain runs to 127 residues: Aspartate 1-decarboxylase (127 aa).

Ser25 acts as the Schiff-base intermediate with substrate; via pyruvic acid in catalysis. Ser25 is subject to Pyruvic acid (Ser). Thr57 contributes to the substrate binding site. Tyr58 functions as the Proton donor in the catalytic mechanism. 73 to 75 (GSA) is a binding site for substrate.

Belongs to the PanD family. As to quaternary structure, heterooctamer of four alpha and four beta subunits. Pyruvate is required as a cofactor. Is synthesized initially as an inactive proenzyme, which is activated by self-cleavage at a specific serine bond to produce a beta-subunit with a hydroxyl group at its C-terminus and an alpha-subunit with a pyruvoyl group at its N-terminus.

It localises to the cytoplasm. It carries out the reaction L-aspartate + H(+) = beta-alanine + CO2. It functions in the pathway cofactor biosynthesis; (R)-pantothenate biosynthesis; beta-alanine from L-aspartate: step 1/1. In terms of biological role, catalyzes the pyruvoyl-dependent decarboxylation of aspartate to produce beta-alanine. In Laribacter hongkongensis (strain HLHK9), this protein is Aspartate 1-decarboxylase.